The primary structure comprises 344 residues: Acireductone dioxygenase (344 aa).

Fe(2+) is bound by residues histidine 92, histidine 94, glutamate 98, and histidine 137. Histidine 92, histidine 94, glutamate 98, and histidine 137 together coordinate Ni(2+).

It belongs to the acireductone dioxygenase (ARD) family. The cofactor is Fe(2+). It depends on Ni(2+) as a cofactor.

The protein resides in the cytoplasm. It is found in the nucleus. It carries out the reaction 1,2-dihydroxy-5-(methylsulfanyl)pent-1-en-3-one + O2 = 4-methylsulfanyl-2-oxobutanoate + formate + 2 H(+). The catalysed reaction is 1,2-dihydroxy-5-(methylsulfanyl)pent-1-en-3-one + O2 = 3-(methylsulfanyl)propanoate + CO + formate + 2 H(+). It participates in amino-acid biosynthesis; L-methionine biosynthesis via salvage pathway; L-methionine from S-methyl-5-thio-alpha-D-ribose 1-phosphate: step 5/6. Catalyzes 2 different reactions between oxygen and the acireductone 1,2-dihydroxy-3-keto-5-methylthiopentene (DHK-MTPene) depending upon the metal bound in the active site. Fe-containing acireductone dioxygenase (Fe-ARD) produces formate and 2-keto-4-methylthiobutyrate (KMTB), the alpha-ketoacid precursor of methionine in the methionine recycle pathway. Ni-containing acireductone dioxygenase (Ni-ARD) produces methylthiopropionate, carbon monoxide and formate, and does not lie on the methionine recycle pathway. The sequence is that of Acireductone dioxygenase from Leishmania braziliensis.